The primary structure comprises 209 residues: NADH-quinone oxidoreductase subunit C (209 aa).

It belongs to the complex I 30 kDa subunit family. NDH-1 is composed of 14 different subunits. Subunits NuoB, C, D, E, F, and G constitute the peripheral sector of the complex.

It is found in the cell inner membrane. The enzyme catalyses a quinone + NADH + 5 H(+)(in) = a quinol + NAD(+) + 4 H(+)(out). Its function is as follows. NDH-1 shuttles electrons from NADH, via FMN and iron-sulfur (Fe-S) centers, to quinones in the respiratory chain. The immediate electron acceptor for the enzyme in this species is believed to be ubiquinone. Couples the redox reaction to proton translocation (for every two electrons transferred, four hydrogen ions are translocated across the cytoplasmic membrane), and thus conserves the redox energy in a proton gradient. This chain is NADH-quinone oxidoreductase subunit C, found in Phenylobacterium zucineum (strain HLK1).